The sequence spans 316 residues: Transaldolase 2 (316 aa).

The active-site Schiff-base intermediate with substrate is the Lys131.

The protein belongs to the transaldolase family. Type 1 subfamily. As to quaternary structure, homodimer.

The protein localises to the cytoplasm. It catalyses the reaction D-sedoheptulose 7-phosphate + D-glyceraldehyde 3-phosphate = D-erythrose 4-phosphate + beta-D-fructose 6-phosphate. Its pathway is carbohydrate degradation; pentose phosphate pathway; D-glyceraldehyde 3-phosphate and beta-D-fructose 6-phosphate from D-ribose 5-phosphate and D-xylulose 5-phosphate (non-oxidative stage): step 2/3. Its function is as follows. Transaldolase is important for the balance of metabolites in the pentose-phosphate pathway. This Salmonella paratyphi A (strain ATCC 9150 / SARB42) protein is Transaldolase 2.